Consider the following 590-residue polypeptide: Negative elongation factor D (590 aa).

Residues 15-43 (FGSAAEWGDEADGGQQEDDYGEGEDDAEV) form a disordered region. A compositionally biased stretch (acidic residues) spans 21–43 (WGDEADGGQQEDDYGEGEDDAEV).

This sequence belongs to the NELF-D family. As to quaternary structure, the NELF complex is composed of NELFA, NELFB, NELFCD and NELFE; NELFA and NELFCD form a stable subcomplex that binds primarily through NELFCD to the N-terminus of NELFB. Binds RNA which may help to stabilize the NELF complex on nucleic acid. In vitro, the NELFA:NELFCD subcomplex binds to ssDNA and ssRNA in a sequence- and structure-dependent manner. Interacts with ARAF1. Interacts with PCF11. Interacts with NELFB. Interacts with KAT8.

It localises to the nucleus. Essential component of the NELF complex, a complex that negatively regulates the elongation of transcription by RNA polymerase II. The NELF complex, which acts via an association with the DSIF complex and causes transcriptional pausing, is counteracted by the P-TEFb kinase complex. The chain is Negative elongation factor D (NELFCD) from Sus scrofa (Pig).